The sequence spans 420 residues: Probable serine hydroxymethyltransferase (420 aa).

(6S)-5,6,7,8-tetrahydrofolate is bound by residues Leu121 and 125–127; that span reads GHL. Position 230 is an N6-(pyridoxal phosphate)lysine (Lys230). (6S)-5,6,7,8-tetrahydrofolate is bound by residues Glu246 and 354 to 356; that span reads SPF.

The protein belongs to the SHMT family. In terms of assembly, homodimer. Pyridoxal 5'-phosphate is required as a cofactor.

Its subcellular location is the cytoplasm. It carries out the reaction (6R)-5,10-methylene-5,6,7,8-tetrahydrofolate + glycine + H2O = (6S)-5,6,7,8-tetrahydrofolate + L-serine. Its pathway is one-carbon metabolism; tetrahydrofolate interconversion. Catalyzes the reversible interconversion of serine and glycine with tetrahydrofolate (THF) serving as the one-carbon carrier. This reaction serves as the major source of one-carbon groups required for the biosynthesis of purines, thymidylate, methionine, and other important biomolecules. In Rickettsia bellii (strain RML369-C), this protein is Probable serine hydroxymethyltransferase.